The chain runs to 227 residues: Small ribosomal subunit protein uS3 (227 aa).

The KH type-2 domain maps to 39–107 (VREFLDKRLV…PVHINIEEVR (69 aa)).

This sequence belongs to the universal ribosomal protein uS3 family. As to quaternary structure, part of the 30S ribosomal subunit. Forms a tight complex with proteins S10 and S14.

In terms of biological role, binds the lower part of the 30S subunit head. Binds mRNA in the 70S ribosome, positioning it for translation. This Marinobacter nauticus (strain ATCC 700491 / DSM 11845 / VT8) (Marinobacter aquaeolei) protein is Small ribosomal subunit protein uS3.